Consider the following 514-residue polypeptide: Synaptic vesicular amine transporter (514 aa).

At 1–20 (MALSELALVRWLQESRRSRK) the chain is on the cytoplasmic side. Residues 21–41 (LILFIVFLALLLDNMLLTVVV) traverse the membrane as a helical segment. The Lumenal, vesicle portion of the chain corresponds to 42 to 129 (PIIPSYLYSI…EDKDLLNENV (88 aa)). N-linked (GlcNAc...) asparagine glycans are attached at residues N84 and N91. C117 and C324 form a disulfide bridge. The helical transmembrane segment at 130–150 (QVGLLFASKATVQLITNPFIG) threads the bilayer. Topologically, residues 151–159 (LLTNRIGYP) are cytoplasmic. The helical transmembrane segment at 160–180 (IPIFAGFCIMFVSTIMFAFSS) threads the bilayer. The Lumenal, vesicle segment spans residues 181 to 189 (SYAFLLIAR). A helical membrane pass occupies residues 190 to 210 (SLQGIGSSCSSVAGMGMLASV). The Cytoplasmic segment spans residues 211–219 (YTDDEERGN). Residues 220–242 (VMGIALGGLAMGVLVGPPFGSVL) traverse the membrane as a helical segment. 2 residues coordinate serotonin: L228 and V232. Residues 243–248 (YEFVGK) lie on the Lumenal, vesicle side of the membrane. A helical membrane pass occupies residues 249–271 (TAPFLVLAALVLLDGAIQLFVLQ). Topologically, residues 272–291 (PSRVQPESQKGTPLTTLLKD) are cytoplasmic. The chain crosses the membrane as a helical span at residues 292–311 (PYILIAAGSICFANMGIAML). Serotonin contacts are provided by N305, I308, E312, F334, and Y341. The Lumenal, vesicle portion of the chain corresponds to 312–328 (EPALPIWMMETMCSRKW). The helical transmembrane segment at 329-352 (QLGVAFLPASISYLIGTNIFGILA) threads the bilayer. The Cytoplasmic portion of the chain corresponds to 353–357 (HKMGR). The helical transmembrane segment at 358 to 378 (WLCALLGMIIVGVSILCIPFA) threads the bilayer. Residues 379–389 (KNIYGLIAPNF) lie on the Lumenal, vesicle side of the membrane. The chain crosses the membrane as a helical span at residues 390–410 (GVGFAIGMVDSSMMPIMGYLV). D399 provides a ligand contact to serotonin. The Cytoplasmic segment spans residues 411–414 (DLRH). Residues 415 to 435 (VSVYGSVYAIADVAFCMGYAI) form a helical membrane-spanning segment. Y433 contacts serotonin. Over 436-440 (GPSAG) the chain is Lumenal, vesicle. A helical membrane pass occupies residues 441-462 (GAIAKAIGFPWLMTIIGIIDIL). Residues 463 to 514 (FAPLCFFLRSPPAKEEKMAILMDHNCPIKTKMYTQNNIQSYPIGEDEESESD) lie on the Cytoplasmic side of the membrane. A phosphoserine mark is found at S511 and S513.

It belongs to the major facilitator superfamily. Vesicular transporter family. Interacts with SLC6A3. In terms of tissue distribution, expressed in neuronal and neuroendocrine tissues. Detected in central and peripheral nervous system in particular in axonal and dendritic processes in dopaminergic cells of substantia nigra, histaminergic neuronal cell bodies of substantia nigra and tuberomammillary nucleus, in ganglion cells of sympathetic glia and in peripheral sympathetic nerve terminals in stomach and duodenum (at protein level). Highly expressed in chromaffin cells of the adrenal medulla and histamine-storing enterochromaffin-like cells of oxyntic mucosa (at protein level).

It localises to the cytoplasmic vesicle. Its subcellular location is the secretory vesicle. The protein resides in the synaptic vesicle membrane. The protein localises to the secretory vesicle membrane. It is found in the cell projection. It localises to the axon. Its subcellular location is the dendrite. The catalysed reaction is serotonin(in) + 2 H(+)(out) = serotonin(out) + 2 H(+)(in). The enzyme catalyses dopamine(in) + 2 H(+)(out) = dopamine(out) + 2 H(+)(in). It carries out the reaction histamine(in) + 2 H(+)(out) = histamine(out) + 2 H(+)(in). Strongly inhibited by reserpine and tetrabenazine. Also inhibited to a lesser extent by ketanserin and fenfluramine. Reserpine and ketanserin inhibit by blocking the substrate-binding pocket. Tetrabenazine traps SLC18A2/VMAT2 in an occluded conformation and its inhibition is specific to SLC18A2/VMAT2 but not SLC18A1/VMAT1. Its function is as follows. Electrogenic antiporter that exchanges one cationic monoamine with two intravesicular protons across the membrane of secretory and synaptic vesicles. Uses the electrochemical proton gradient established by the V-type proton-pump ATPase to accumulate high concentrations of monoamines inside the vesicles prior to their release via exocytosis. Transports a variety of catecholamines such as dopamine, adrenaline and noradrenaline, histamine, and indolamines such as serotonin. Regulates the transvesicular monoaminergic gradient that determines the quantal size. Mediates somatodendritic dopamine release in hippocampal neurons, likely as part of a regulated secretory pathway that integrates retrograde synaptic signals. Acts as a primary transporter for striatal dopamine loading ensuring impulse-dependent release of dopamine at the synaptic cleft. Responsible for histamine and serotonin storage and subsequent corelease from mast cell granules. The protein is Synaptic vesicular amine transporter (SLC18A2) of Homo sapiens (Human).